The sequence spans 342 residues: Prenyl transferase penC (342 aa).

Residues 17 to 37 traverse the membrane as a helical segment; sequence LSYLTLTVGALALVVVLYISI. His-110 is a binding site for isopentenyl diphosphate. Mg(2+)-binding residues include Asp-117 and Asp-121. Arg-126 is a dimethylallyl diphosphate binding site. A glycan (N-linked (GlcNAc...) asparagine) is linked at Asn-154. Lys-210 is a dimethylallyl diphosphate binding site.

Belongs to the FPP/GGPP synthase family.

Its subcellular location is the membrane. It functions in the pathway secondary metabolite biosynthesis. Its function is as follows. Prenyl transferase; part of the gene cluster that mediates the biosynthesis of the indole diterpenes penitrems. The geranylgeranyl diphosphate (GGPP) synthase penG catalyzes the first step in penitrem biosynthesis via conversion of farnesyl pyrophosphate and isopentyl pyrophosphate into geranylgeranyl pyrophosphate (GGPP). Condensation of indole-3-glycerol phosphate with GGPP by the prenyl transferase penC then forms 3-geranylgeranylindole (3-GGI). Epoxidation by the FAD-dependent monooxygenase penM leads to a epoxidized-GGI that is substrate of the terpene cyclase penB for cyclization to yield paspaline. Paspaline is subsequently converted to 13-desoxypaxilline by the cytochrome P450 monooxygenase penP, the latter being then converted to paxilline by the cytochrome P450 monooxygenase penQ. Paxilline is converted to beta-paxitriol via C-10 ketoreduction by the short-chain dehydrogenase PC-15 which can be monoprenylated at the C-20 by the indole diterpene prenyltransferase penD. A two-step elimination (acetylation and elimination) process performed by the O-acetyltransferase PC-16 and the P.simplicissimum ptmI-ortholog not yet identified in P.crustosum, leads to the production of the prenylated form of penijanthine. The FAD-linked oxidoreductase ptmO then converts the prenylated form of penijanthine into PC-M5 which is in turn transformed into PC-M4 by the aromatic dimethylallyltransferase PC-22. A series of oxidation steps involving 4 cytochrome P450 monooxygenases (PC-21, PC-05, PC-23, PC-20) and a FAD-dependent monooxygenase (PC-14) are required for the transformation of PC-M4 to penitrems A and E. Synthesis of these final products is proposed to proceed via penitrems D and C (PC-21, PC-05, PC-14) and penitrems B and F (PC-21, PC-05, PC-14, PC-23). The chain is Prenyl transferase penC from Penicillium crustosum (Blue mold fungus).